A 613-amino-acid polypeptide reads, in one-letter code: 4-hydroxy-3-methylbut-2-en-1-yl diphosphate synthase (flavodoxin) (613 aa).

[4Fe-4S] cluster-binding residues include C521, C524, C555, and E562.

It belongs to the IspG family. Requires [4Fe-4S] cluster as cofactor.

The catalysed reaction is (2E)-4-hydroxy-3-methylbut-2-enyl diphosphate + oxidized [flavodoxin] + H2O + 2 H(+) = 2-C-methyl-D-erythritol 2,4-cyclic diphosphate + reduced [flavodoxin]. It functions in the pathway isoprenoid biosynthesis; isopentenyl diphosphate biosynthesis via DXP pathway; isopentenyl diphosphate from 1-deoxy-D-xylulose 5-phosphate: step 5/6. In terms of biological role, converts 2C-methyl-D-erythritol 2,4-cyclodiphosphate (ME-2,4cPP) into 1-hydroxy-2-methyl-2-(E)-butenyl 4-diphosphate. The polypeptide is 4-hydroxy-3-methylbut-2-en-1-yl diphosphate synthase (flavodoxin) (Bacteroides thetaiotaomicron (strain ATCC 29148 / DSM 2079 / JCM 5827 / CCUG 10774 / NCTC 10582 / VPI-5482 / E50)).